Consider the following 690-residue polypeptide: Dual specificity protein kinase lkh1 (690 aa).

Positions 39–70 are disordered; sequence PNLPPPFSVHQLQSFVPPQPPSSSSPSTTGTV. One can recognise a Protein kinase domain in the interval 362–682; it reads YTVVRLLGHG…AKEALWHPFF (321 aa). ATP contacts are provided by residues 368–376 and K391; that span reads LGHGTFGKV. The Proton acceptor role is filled by D488.

The protein belongs to the protein kinase superfamily. CMGC Ser/Thr protein kinase family. Lammer subfamily. Post-translationally, autophosphorylates on all three types of residues.

The catalysed reaction is L-seryl-[protein] + ATP = O-phospho-L-seryl-[protein] + ADP + H(+). It carries out the reaction L-threonyl-[protein] + ATP = O-phospho-L-threonyl-[protein] + ADP + H(+). It catalyses the reaction L-tyrosyl-[protein] + ATP = O-phospho-L-tyrosyl-[protein] + ADP + H(+). Functionally, protein kinase that may act as a negative regulator of filamentous growth and flocculation. Appears to have a role in normal cell wall and septum formation and in cell separation. May have antagonistic function in the regulation of beta-glucan distribution between the sites for cell wall and septum assembly. This Schizosaccharomyces pombe (strain 972 / ATCC 24843) (Fission yeast) protein is Dual specificity protein kinase lkh1 (lkh1).